The following is a 180-amino-acid chain: Molybdopterin synthase catalytic subunit (180 aa).

Residues 123–124 (HR), K139, and 146–148 (KLE) each bind substrate. A disordered region spans residues 161–180 (RDGQKGVKVEGGKEGVEAKH).

It belongs to the MoaE family. MOCS2B subfamily. In terms of assembly, heterotetramer; composed of 2 small (MOCS2A) and 2 large (MOCS2B) subunits.

The protein resides in the cytoplasm. The catalysed reaction is 2 [molybdopterin-synthase sulfur-carrier protein]-C-terminal-Gly-aminoethanethioate + cyclic pyranopterin phosphate + H2O = molybdopterin + 2 [molybdopterin-synthase sulfur-carrier protein]-C-terminal Gly-Gly + 2 H(+). It functions in the pathway cofactor biosynthesis; molybdopterin biosynthesis. Functionally, catalytic subunit of the molybdopterin synthase complex, a complex that catalyzes the conversion of precursor Z into molybdopterin. Acts by mediating the incorporation of 2 sulfur atoms from thiocarboxylated MOCS2A into precursor Z to generate a dithiolene group. The chain is Molybdopterin synthase catalytic subunit from Pyrenophora tritici-repentis (strain Pt-1C-BFP) (Wheat tan spot fungus).